The following is a 343-amino-acid chain: Sorbitol dehydrogenase (343 aa).

The tract at residues 1–26 (MKALVKTQHGTGHFAVQEKPEPTPGK) is disordered. Residues C39, H60, and E61 each coordinate Zn(2+). Position 146 (E146) interacts with substrate. Residues I174, R200, and 262–264 (VGL) contribute to the NAD(+) site.

The protein belongs to the zinc-containing alcohol dehydrogenase family. In terms of assembly, homotetramer. Zn(2+) is required as a cofactor.

The enzyme catalyses keto-D-fructose + NADH + H(+) = D-sorbitol + NAD(+). It carries out the reaction xylitol + NAD(+) = D-xylulose + NADH + H(+). It catalyses the reaction L-iditol + NAD(+) = keto-L-sorbose + NADH + H(+). In terms of biological role, polyol dehydrogenase that catalyzes the NAD(+)-dependent oxidation of various sugar alcohols. Is active with D-sorbitol (D-glucitol), xylitol and L-iditol as substrates, leading to the C2-oxidized products D-fructose, D-xylulose and L-sorbose, respectively. The chain is Sorbitol dehydrogenase (gutB) from Halalkalibacterium halodurans (strain ATCC BAA-125 / DSM 18197 / FERM 7344 / JCM 9153 / C-125) (Bacillus halodurans).